Here is a 438-residue protein sequence, read N- to C-terminus: Aspartate aminotransferase, cytoplasmic (438 aa).

L-aspartate-binding residues include glycine 73, tryptophan 167, and asparagine 220. At lysine 284 the chain carries N6-(pyridoxal phosphate)lysine. Arginine 412 serves as a coordination point for L-aspartate.

This sequence belongs to the class-I pyridoxal-phosphate-dependent aminotransferase family. Homodimer. The cofactor is pyridoxal 5'-phosphate.

Its subcellular location is the cytoplasm. The catalysed reaction is L-aspartate + 2-oxoglutarate = oxaloacetate + L-glutamate. Plays a key role in amino acid metabolism. The chain is Aspartate aminotransferase, cytoplasmic (aatB) from Dictyostelium discoideum (Social amoeba).